The following is a 397-amino-acid chain: DnaJ homolog subfamily A member 1 (397 aa).

Residues threonine 6 to glycine 68 form the J domain. The residue at position 66 (lysine 66) is an N6-acetyllysine. Serine 83 bears the Phosphoserine mark. The CR-type zinc-finger motif lies at glycine 121 to lysine 205. 8 residues coordinate Zn(2+): cysteine 134, cysteine 137, cysteine 150, cysteine 153, cysteine 177, cysteine 180, cysteine 193, and cysteine 196. CXXCXGXG motif repeat units lie at residues cysteine 134–glycine 141, cysteine 150–glycine 157, cysteine 177–glycine 184, and cysteine 193–lysine 200. Serine 335 carries the post-translational modification Phosphoserine. The tract at residues valine 352–serine 397 is disordered. The span at glutamate 353–aspartate 365 shows a compositional bias: acidic residues. At tyrosine 381 the chain carries Phosphotyrosine. Cysteine 394 carries the post-translational modification Cysteine methyl ester. Cysteine 394 is lipidated: S-farnesyl cysteine. Positions glutamine 395–serine 397 are cleaved as a propeptide — removed in mature form.

Identified in a complex with HSPA1B and BAX. Interacts with RNF207.

The protein localises to the membrane. The protein resides in the cytoplasm. It is found in the microsome. It localises to the mitochondrion. Its subcellular location is the nucleus. The protein localises to the perinuclear region. Co-chaperone for HSPA8/Hsc70. Plays a role in protein transport into mitochondria via its role as co-chaperone. Functions as co-chaperone for HSPA1B and negatively regulates the translocation of BAX from the cytosol to mitochondria in response to cellular stress, thereby protecting cells against apoptosis. Stimulates ATP hydrolysis, but not the folding of unfolded proteins mediated by HSPA1A (in vitro). Promotes apoptosis in response to cellular stress mediated by exposure to anisomycin or UV. The protein is DnaJ homolog subfamily A member 1 (DNAJA1) of Bos taurus (Bovine).